A 203-amino-acid chain; its full sequence is Peptide deformylase (203 aa).

Fe cation-binding residues include C130 and H173. E174 is an active-site residue. Residue H177 participates in Fe cation binding.

The protein belongs to the polypeptide deformylase family. Requires Fe(2+) as cofactor.

It carries out the reaction N-terminal N-formyl-L-methionyl-[peptide] + H2O = N-terminal L-methionyl-[peptide] + formate. Removes the formyl group from the N-terminal Met of newly synthesized proteins. Requires at least a dipeptide for an efficient rate of reaction. N-terminal L-methionine is a prerequisite for activity but the enzyme has broad specificity at other positions. The sequence is that of Peptide deformylase from Streptococcus pneumoniae serotype 2 (strain D39 / NCTC 7466).